We begin with the raw amino-acid sequence, 831 residues long: Periplasmic nitrate reductase (831 aa).

A signal peptide (tat-type signal) is located at residues 1–29; that stretch reads MKVSRRDFIKQTAIAATASVAGIPLGTEA. Residues 41–97 enclose the 4Fe-4S Mo/W bis-MGD-type domain; sequence LKWSKAPCRFCGTGCGVTVAVRDNKVVATQGDPQCEVNKGLNCVKGYFLSKIMYGQD. [4Fe-4S] cluster is bound by residues Cys48, Cys51, Cys55, and Cys83. Mo-bis(molybdopterin guanine dinucleotide) contacts are provided by residues Lys85, Gln152, Asn177, Cys181, 214-221, 245-249, 264-266, Met375, Gln379, Asn485, 511-512, Lys534, Asp561, and 721-730; these read WGSNMAEM, STFTH, QTD, SD, and TGRVLEHWHS. A substrate-binding site is contributed by Trp797. Mo-bis(molybdopterin guanine dinucleotide)-binding residues include Asn805 and Lys822.

This sequence belongs to the prokaryotic molybdopterin-containing oxidoreductase family. NasA/NapA/NarB subfamily. As to quaternary structure, component of the periplasmic nitrate reductase NapAB complex composed of NapA and NapB. [4Fe-4S] cluster is required as a cofactor. Mo-bis(molybdopterin guanine dinucleotide) serves as cofactor. Post-translationally, predicted to be exported by the Tat system. The position of the signal peptide cleavage has not been experimentally proven.

The protein localises to the periplasm. It catalyses the reaction 2 Fe(II)-[cytochrome] + nitrate + 2 H(+) = 2 Fe(III)-[cytochrome] + nitrite + H2O. Functionally, catalytic subunit of the periplasmic nitrate reductase complex NapAB. Receives electrons from NapB and catalyzes the reduction of nitrate to nitrite. This chain is Periplasmic nitrate reductase, found in Cupriavidus pinatubonensis (strain JMP 134 / LMG 1197) (Cupriavidus necator (strain JMP 134)).